Consider the following 312-residue polypeptide: Olfactory receptor 8G50 (312 aa).

The Extracellular portion of the chain corresponds to 1 to 28 (MAYSNQSRVTEFIISGLTNKPELQLPLF). Residue Asn-5 is glycosylated (N-linked (GlcNAc...) asparagine). The helical transmembrane segment at 29–49 (LLFLGIYLFTVLGNLGMIILI) threads the bilayer. Over 50-56 (LLSSHLH) the chain is Cytoplasmic. A helical membrane pass occupies residues 57 to 77 (TPMYFFLSSLSFIDLCYSTII). At 78 to 99 (TPKMLVNFVTTKNVISYQECMT) the chain is on the extracellular side. Cys-97 and Cys-189 are disulfide-bonded. Residues 100 to 120 (QLYFFIAFVISECHMLAAMAY) form a helical membrane-spanning segment. The Cytoplasmic segment spans residues 121-143 (DRYVAICNPLLYNVTMSYQVCSW). Residues 144 to 164 (MVGGVYGMGFIGAAIHTFCML) traverse the membrane as a helical segment. Residues 165 to 204 (RVVFCKDNIINHYFCDLFPLMELACSSTYVNEVVLLSLSA) are Extracellular-facing. Residues 205–225 (FNIFIPTLTILGSYIFIIISI) traverse the membrane as a helical segment. The Cytoplasmic portion of the chain corresponds to 226–244 (LRIKSTEGRFKAFSTCSSH). A helical transmembrane segment spans residues 245 to 265 (FSAVSVFFGSLAFMYLQPFSV). Over 266–274 (SSKDKGKVS) the chain is Extracellular. The helical transmembrane segment at 275-292 (SVFYTTIVPMLNPMIYSL) threads the bilayer. At 293–312 (RNRDVKLALNKLFQKKKFHV) the chain is on the cytoplasmic side.

This sequence belongs to the G-protein coupled receptor 1 family.

It is found in the cell membrane. Functionally, odorant receptor. This is Olfactory receptor 8G50 from Mus musculus (Mouse).